The following is a 570-amino-acid chain: Periplasmic trehalase (570 aa).

Residues 1 to 34 (MIPPEIRRSVLLQKAIKLALAGTLLTFASFSATA) form the signal peptide. Substrate is bound by residues Arg-159, 166-167 (WD), Asn-203, 212-214 (RSQ), 284-286 (RPE), and Gly-317. Catalysis depends on proton donor/acceptor residues Asp-319 and Glu-503. Position 518 (Glu-518) interacts with substrate. The segment at 544–570 (KPCDSVPSTRPASLSATPTKTPSAATQ) is disordered. Residues 554-570 (PASLSATPTKTPSAATQ) are compositionally biased toward low complexity.

This sequence belongs to the glycosyl hydrolase 37 family. Monomer.

The protein resides in the periplasm. It carries out the reaction alpha,alpha-trehalose + H2O = alpha-D-glucose + beta-D-glucose. Functionally, provides the cells with the ability to utilize trehalose at high osmolarity by splitting it into glucose molecules that can subsequently be taken up by the phosphotransferase-mediated uptake system. This chain is Periplasmic trehalase, found in Salmonella dublin (strain CT_02021853).